The following is a 164-amino-acid chain: UPF0225 protein Shewmr7_1921 (164 aa).

It belongs to the UPF0225 family.

In Shewanella sp. (strain MR-7), this protein is UPF0225 protein Shewmr7_1921.